A 283-amino-acid chain; its full sequence is Phosphatidylserine decarboxylase proenzyme (283 aa).

Catalysis depends on charge relay system; for autoendoproteolytic cleavage activity residues aspartate 89, histidine 146, and serine 249. Serine 249 serves as the catalytic Schiff-base intermediate with substrate; via pyruvic acid; for decarboxylase activity. Serine 249 is modified (pyruvic acid (Ser); by autocatalysis).

It belongs to the phosphatidylserine decarboxylase family. PSD-B subfamily. Prokaryotic type I sub-subfamily. Heterodimer of a large membrane-associated beta subunit and a small pyruvoyl-containing alpha subunit. Requires pyruvate as cofactor. In terms of processing, is synthesized initially as an inactive proenzyme. Formation of the active enzyme involves a self-maturation process in which the active site pyruvoyl group is generated from an internal serine residue via an autocatalytic post-translational modification. Two non-identical subunits are generated from the proenzyme in this reaction, and the pyruvate is formed at the N-terminus of the alpha chain, which is derived from the carboxyl end of the proenzyme. The autoendoproteolytic cleavage occurs by a canonical serine protease mechanism, in which the side chain hydroxyl group of the serine supplies its oxygen atom to form the C-terminus of the beta chain, while the remainder of the serine residue undergoes an oxidative deamination to produce ammonia and the pyruvoyl prosthetic group on the alpha chain. During this reaction, the Ser that is part of the protease active site of the proenzyme becomes the pyruvoyl prosthetic group, which constitutes an essential element of the active site of the mature decarboxylase.

The protein localises to the cell membrane. The catalysed reaction is a 1,2-diacyl-sn-glycero-3-phospho-L-serine + H(+) = a 1,2-diacyl-sn-glycero-3-phosphoethanolamine + CO2. It participates in phospholipid metabolism; phosphatidylethanolamine biosynthesis; phosphatidylethanolamine from CDP-diacylglycerol: step 2/2. Functionally, catalyzes the formation of phosphatidylethanolamine (PtdEtn) from phosphatidylserine (PtdSer). This chain is Phosphatidylserine decarboxylase proenzyme, found in Legionella pneumophila (strain Corby).